Here is a 458-residue protein sequence, read N- to C-terminus: tRNA modification GTPase MnmE (458 aa).

Positions 22, 84, and 123 each coordinate (6S)-5-formyl-5,6,7,8-tetrahydrofolate. Residues 220-379 enclose the TrmE-type G domain; sequence GIATAIIGRP…LETAIADLFF (160 aa). N230 lines the K(+) pocket. GTP contacts are provided by residues 230–235, 249–255, and 274–277; these read NVGKSS, TDIAGTT, and DTAG. Position 234 (S234) interacts with Mg(2+). Positions 249, 251, and 254 each coordinate K(+). T255 serves as a coordination point for Mg(2+). A (6S)-5-formyl-5,6,7,8-tetrahydrofolate-binding site is contributed by K458.

The protein belongs to the TRAFAC class TrmE-Era-EngA-EngB-Septin-like GTPase superfamily. TrmE GTPase family. As to quaternary structure, homodimer. Heterotetramer of two MnmE and two MnmG subunits. Requires K(+) as cofactor.

The protein resides in the cytoplasm. Functionally, exhibits a very high intrinsic GTPase hydrolysis rate. Involved in the addition of a carboxymethylaminomethyl (cmnm) group at the wobble position (U34) of certain tRNAs, forming tRNA-cmnm(5)s(2)U34. This is tRNA modification GTPase MnmE from Bacillus cereus (strain ATCC 10987 / NRS 248).